Reading from the N-terminus, the 748-residue chain is Cysteine--tRNA ligase, cytoplasmic (748 aa).

Residues 1–25 (MADSSGQQGKGRRVQPQWSPPAGTQ) are disordered. At Ala2 the chain carries N-acetylalanine. Ser19 is modified (phosphoserine). Residue Cys55 participates in Zn(2+) binding. Gly56 is a binding site for L-cysteine. Residues 57–67 (PTVYDASHMGH) carry the 'HIGH' region motif. The residue at position 79 (Arg79) is a Phosphoserine. Thr96 contributes to the L-cysteine binding site. A 'KIIK' region motif is present at residues 101-104 (KIIK). 2 positions are modified to phosphoserine: Ser305 and Ser307. Residues Cys348, His373, and Glu377 each coordinate Zn(2+). His373 serves as a coordination point for L-cysteine. A 'KMSKS' region motif is present at residues 406–410 (KMSKS). ATP is bound at residue Lys409. Lys503 carries the post-translational modification N6-acetyllysine. Residues 653-679 (EKRRVEEEKRKKKEEAARRKQEQEAAK) show a composition bias toward basic and acidic residues. The segment at 653–686 (EKRRVEEEKRKKKEEAARRKQEQEAAKLAKMKIP) is disordered. The residue at position 746 (Ser746) is a Phosphoserine.

It belongs to the class-I aminoacyl-tRNA synthetase family. Homodimer. Requires Zn(2+) as cofactor.

The protein localises to the cytoplasm. It catalyses the reaction tRNA(Cys) + L-cysteine + ATP = L-cysteinyl-tRNA(Cys) + AMP + diphosphate. Its function is as follows. Catalyzes the ATP-dependent ligation of cysteine to tRNA(Cys). In Homo sapiens (Human), this protein is Cysteine--tRNA ligase, cytoplasmic.